The following is a 207-amino-acid chain: Phosphoribosylglycinamide formyltransferase (207 aa).

A N(1)-(5-phospho-beta-D-ribosyl)glycinamide-binding site is contributed by 13–15 (GSN). (6R)-10-formyltetrahydrofolate is bound by residues 100-103 (MHIL) and asparagine 120. Catalysis depends on histidine 122, which acts as the Proton donor. (6R)-10-formyltetrahydrofolate is bound at residue aspartate 162. Glutamate 191 provides a ligand contact to N(1)-(5-phospho-beta-D-ribosyl)glycinamide.

This sequence belongs to the GART family.

It catalyses the reaction N(1)-(5-phospho-beta-D-ribosyl)glycinamide + (6R)-10-formyltetrahydrofolate = N(2)-formyl-N(1)-(5-phospho-beta-D-ribosyl)glycinamide + (6S)-5,6,7,8-tetrahydrofolate + H(+). It functions in the pathway purine metabolism; IMP biosynthesis via de novo pathway; N(2)-formyl-N(1)-(5-phospho-D-ribosyl)glycinamide from N(1)-(5-phospho-D-ribosyl)glycinamide (10-formyl THF route): step 1/1. The protein is Phosphoribosylglycinamide formyltransferase (ade5) of Schizosaccharomyces pombe (strain 972 / ATCC 24843) (Fission yeast).